A 458-amino-acid chain; its full sequence is Mitochondrial distribution and morphology protein 10 (458 aa).

The interval 307-339 is disordered; that stretch reads LDQRRTEPLDAPNTNSSVFSKERVQKKQGPKED. The segment covering 326–339 has biased composition (basic and acidic residues); the sequence is SKERVQKKQGPKED.

It belongs to the MDM10 family. Component of the ER-mitochondria encounter structure (ERMES) or MDM complex, composed of MMM1, MDM10, MDM12 and MDM34. Associates with the mitochondrial outer membrane sorting assembly machinery SAM(core) complex.

It is found in the mitochondrion outer membrane. In terms of biological role, component of the ERMES/MDM complex, which serves as a molecular tether to connect the endoplasmic reticulum and mitochondria. Components of this complex are involved in the control of mitochondrial shape and protein biogenesis and may function in phospholipid exchange. MDM10 is involved in the late assembly steps of the general translocase of the mitochondrial outer membrane (TOM complex). Functions in the TOM40-specific route of the assembly of outer membrane beta-barrel proteins, including the association of TOM40 with the receptor TOM22 and small TOM proteins. Can associate with the SAM(core) complex as well as the MDM12-MMM1 complex, both involved in late steps of the major beta-barrel assembly pathway, that is responsible for biogenesis of all outer membrane beta-barrel proteins. May act as a switch that shuttles between both complexes and channels precursor proteins into the TOM40-specific pathway. Plays a role in mitochondrial morphology and in the inheritance of mitochondria. In Lachancea thermotolerans (strain ATCC 56472 / CBS 6340 / NRRL Y-8284) (Yeast), this protein is Mitochondrial distribution and morphology protein 10.